The primary structure comprises 283 residues: Large ribosomal subunit protein uL2c (283 aa).

The interval 229–274 is disordered; it reads GVVMNPIDHPHGGGEGKVPIGRKKPLTPWGHPALGRKSRKRRKYSD. The span at 262-271 shows a compositional bias: basic residues; sequence LGRKSRKRRK.

This sequence belongs to the universal ribosomal protein uL2 family. As to quaternary structure, part of the 50S ribosomal subunit.

The protein resides in the plastid. This chain is Large ribosomal subunit protein uL2c (rpl2), found in Aneura mirabilis (Parasitic liverwort).